We begin with the raw amino-acid sequence, 1372 residues long: DNA-directed RNA polymerase subunit beta (1372 aa).

This sequence belongs to the RNA polymerase beta chain family. As to quaternary structure, the RNAP catalytic core consists of 2 alpha, 1 beta, 1 beta' and 1 omega subunit. When a sigma factor is associated with the core the holoenzyme is formed, which can initiate transcription.

The enzyme catalyses RNA(n) + a ribonucleoside 5'-triphosphate = RNA(n+1) + diphosphate. DNA-dependent RNA polymerase catalyzes the transcription of DNA into RNA using the four ribonucleoside triphosphates as substrates. This Rickettsia bellii (strain OSU 85-389) protein is DNA-directed RNA polymerase subunit beta.